The following is a 452-amino-acid chain: Phosphoglucosamine mutase (452 aa).

S104 (phosphoserine intermediate) is an active-site residue. Mg(2+) contacts are provided by S104, D244, D246, and D248. S104 carries the post-translational modification Phosphoserine.

Belongs to the phosphohexose mutase family. It depends on Mg(2+) as a cofactor. Post-translationally, activated by phosphorylation.

The catalysed reaction is alpha-D-glucosamine 1-phosphate = D-glucosamine 6-phosphate. Its function is as follows. Catalyzes the conversion of glucosamine-6-phosphate to glucosamine-1-phosphate. The sequence is that of Phosphoglucosamine mutase from Pediococcus pentosaceus (strain ATCC 25745 / CCUG 21536 / LMG 10740 / 183-1w).